The sequence spans 394 residues: Na(+)/H(+) antiporter NhaA (394 aa).

11 helical membrane-spanning segments follow: residues 14 to 34 (AGGI…NSVF), 59 to 79 (LLMW…GMEV), 95 to 115 (IFPA…YWFI), 125 to 145 (GWAI…ALLS), 155 to 175 (FLLA…ALFF), 177 to 197 (NELS…LITM), 204 to 224 (GIIH…KSGV), 258 to 278 (WCAF…SLAG), 292 to 312 (ITLG…YLAV), 328 to 348 (VFAI…IAGL), and 362 to 382 (LSRL…YILL).

Belongs to the NhaA Na(+)/H(+) (TC 2.A.33) antiporter family.

It is found in the cell inner membrane. It carries out the reaction Na(+)(in) + 2 H(+)(out) = Na(+)(out) + 2 H(+)(in). Its function is as follows. Na(+)/H(+) antiporter that extrudes sodium in exchange for external protons. The protein is Na(+)/H(+) antiporter NhaA of Haemophilus ducreyi (strain 35000HP / ATCC 700724).